The following is a 327-amino-acid chain: E3 ubiquitin ligase Rnf121 (327 aa).

Ala2 is subject to N-acetylalanine. 5 helical membrane-spanning segments follow: residues 50 to 70 (MHAEMVLILIATLVVAQLLLV), 79 to 99 (SYNMVTLFQMWVVPLYFTVKL), 100 to 120 (HWWRFLVIWIFFSAVTAFVTF), 148 to 168 (ATGIVGYMAVMFTLFGLNLLF), and 172 to 192 (PEDAMDFGISLLFYGLYYGVL). An RING-type; atypical zinc finger spans residues 226–276 (CAVCGQQIFVDVNEEGIIENTYRLSCNHVFHEFCIRGWCIVGKKQTCPYCK). The helical transmembrane segment at 306-326 (LVAWQPVIIGLVQGISYILGL) threads the bilayer.

Belongs to the RNF121 family.

It is found in the endoplasmic reticulum membrane. The catalysed reaction is S-ubiquitinyl-[E2 ubiquitin-conjugating enzyme]-L-cysteine + [acceptor protein]-L-lysine = [E2 ubiquitin-conjugating enzyme]-L-cysteine + N(6)-ubiquitinyl-[acceptor protein]-L-lysine.. It functions in the pathway protein modification; protein ubiquitination. In terms of biological role, E3 ubiquitin ligase which accepts ubiquitin and transfers it to substrates thereby promoting their degradation by the endoplasmic reticulum-associated degradation (ERAD) pathway which is a pathway involved in ubiquitin-dependent degradation of misfolded endoplasmic reticulum proteins. May regulate the unfolded protein response to reduce endoplasmic reticulum stress. The protein is E3 ubiquitin ligase Rnf121 (Rnf121) of Mus musculus (Mouse).